The primary structure comprises 762 residues: Subtilisin-like protease SBT3.11 (762 aa).

The N-terminal stretch at 1–16 (MMSSIVSWWFFWVISA) is a signal peptide. The propeptide at 17-116 (VCILKVEFNI…VTPNTFYELQ (100 aa)) is activation peptide. One can recognise an Inhibitor I9 domain in the interval 37-115 (VHIVYLGEKE…QVTPNTFYEL (79 aa)). Residues 120–609 (TFDYLGLSHS…GGLVNPNKAA (490 aa)) enclose the Peptidase S8 domain. Residue Asp-150 is the Charge relay system of the active site. Asn-206 carries an N-linked (GlcNAc...) asparagine glycan. The Charge relay system role is filled by His-226. Residues Asn-241 and Asn-371 are each glycosylated (N-linked (GlcNAc...) asparagine). The active-site Charge relay system is the Ser-540.

This sequence belongs to the peptidase S8 family.

It is found in the secreted. This Arabidopsis thaliana (Mouse-ear cress) protein is Subtilisin-like protease SBT3.11.